A 718-amino-acid polypeptide reads, in one-letter code: Cyclic-di-AMP phosphodiesterase PgpH (718 aa).

At 1-17 the chain is on the cytoplasmic side; it reads MKLAKKWRDWYIESGKK. The chain crosses the membrane as a helical span at residues 18 to 38; that stretch reads YLFPLLLVCFAVIAYFLVCQM. Residues 39-289 lie on the Extracellular side of the membrane; the sequence is TKPESYNVKL…MLHLLDQKMP (251 aa). Basic and acidic residues predominate over residues 112-127; that stretch reads QEKDTKNKEKAKKENK. Residues 112 to 140 form a disordered region; the sequence is QEKDTKNKEKAKKENKPAPAPTSTEDKLK. A helical membrane pass occupies residues 290-310; sequence VKQYAGFAIFIIALAAILFLY. At 311-324 the chain is on the cytoplasmic side; that stretch reads TKKQTQPKAKKMQT. A helical transmembrane segment spans residues 325–345; that stretch reads MLIFSSVYLVSLFMLFIILFL. Residues 346-349 lie on the Extracellular side of the membrane; the sequence is ETQN. A run of 2 helical transmembrane segments spans residues 350-370 and 371-391; these read IANI…KILL and NEKY…LTFQ. Position 392 (Asn-392) is a topological domain, extracellular. Residues 393-413 form a helical membrane-spanning segment; it reads DATSGITIFILLSGATSVVML. Topologically, residues 414-421 are cytoplasmic; the sequence is RDYSRRSA. The helical transmembrane segment at 422 to 442 threads the bilayer; it reads IMLSGFMVGLINMIYVLLLLL. At 443-457 the chain is on the extracellular side; sequence INNSTLLQVSTLMAL. Residues 458–478 traverse the membrane as a helical segment; the sequence is GYAFLGGFGAFILGVGVIPLF. Topologically, residues 479-718 are cytoplasmic; the sequence is ETIFGLLTTS…QRIQYPDDKD (240 aa). Positions 511–653 constitute an HD domain; sequence TYHHSMMVAN…INISDSVEAA (143 aa). The Mn(2+) site is built by His-514, His-543, and Asp-544. His-514 serves as a coordination point for substrate. Residues 544–547 and 555–556 each bind substrate; these read DIGK and VE. His-580, His-604, and His-605 together coordinate Mn(2+). Residues Tyr-631 and Asp-648 each coordinate substrate. Asp-648 is a Mn(2+) binding site.

It belongs to the PgpH phosphodiesterase family. Mn(2+) is required as a cofactor.

It localises to the cell membrane. The catalysed reaction is 3',3'-c-di-AMP + H2O = 5'-O-phosphonoadenylyl-(3'-&gt;5')-adenosine + H(+). C-di-AMP hydrolysis inhibited by ppGpp, without altering c-di-AMP binding. Its function is as follows. A phosphodiesterase (PDE) that hydrolyzes cyclic di-3',5'-adenylate (c-di-AMP); there are at least 2 PDEs for c-di-AMP in this bacteria (this and pdeA), this may be the major PDE for growth in liquid culture. During host infection c-di-AMP is secreted into the host cytoplasm which leads to interferon-beta production and secretion by the host. The cytoplasmic HD domain binds and hydrolyzes c-di-AMP to 5'-pApA; has very low activity against c-di-GMP, does not hydrolyze ppGpp. The sequence is that of Cyclic-di-AMP phosphodiesterase PgpH from Listeria monocytogenes serotype 1/2a (strain 10403S).